We begin with the raw amino-acid sequence, 528 residues long: Phosphoenolpyruvate carboxykinase (ATP) (528 aa).

Substrate is bound by residues arginine 56, tyrosine 192, and lysine 198. ATP-binding positions include lysine 198, histidine 217, and 233–241 (GLSGTGKTT). Mn(2+) contacts are provided by lysine 198 and histidine 217. Aspartate 254 serves as a coordination point for Mn(2+). Glutamate 282, arginine 319, and threonine 444 together coordinate ATP. A substrate-binding site is contributed by arginine 319.

It belongs to the phosphoenolpyruvate carboxykinase (ATP) family. It depends on Mn(2+) as a cofactor.

It localises to the cytoplasm. It carries out the reaction oxaloacetate + ATP = phosphoenolpyruvate + ADP + CO2. It functions in the pathway carbohydrate biosynthesis; gluconeogenesis. Its function is as follows. Involved in the gluconeogenesis. Catalyzes the conversion of oxaloacetate (OAA) to phosphoenolpyruvate (PEP) through direct phosphoryl transfer between the nucleoside triphosphate and OAA. The protein is Phosphoenolpyruvate carboxykinase (ATP) of Lysinibacillus sphaericus (strain C3-41).